Reading from the N-terminus, the 46-residue chain is Diuretic hormone (46 aa).

Isoleucine amide is present on Ile-46.

Belongs to the sauvagine/corticotropin-releasing factor/urotensin I family.

It localises to the secreted. In terms of biological role, regulation of fluid secretion. Stimulates primary urine secretion by Malpighian tubules and causes a dose-dependent stimulation of cAMP levels in the tubules. In Locusta migratoria (Migratory locust), this protein is Diuretic hormone.